The sequence spans 498 residues: Diacylglycerol O-acyltransferase 1 (498 aa).

The interval 1–66 (MGDRGGAGSS…AHTRDKDRQT (66 aa)) is disordered. The Cytoplasmic segment spans residues 1–92 (MGDRGGAGSS…SLFSSDSGFS (92 aa)). Residues 1–96 (MGDRGGAGSS…SDSGFSNYRG (96 aa)) are involved in homomerization. Ser20 carries the phosphoserine modification. A compositionally biased stretch (basic and acidic residues) spans 58–68 (HTRDKDRQTSV). The chain crosses the membrane as a helical span at residues 93–127 (NYRGILNWCVVMLILSNARLSLENLIKYGILVDPI). Over 128 to 139 (QVVSLFLKDPYS) the chain is Lumenal. Positions 128 to 139 (QVVSLFLKDPYS) are extracellular loop 1 (EL1). A helical transmembrane segment spans residues 140 to 165 (WPAPCLIIASNIFIVATFQIEKRLSV). The segment at 140–498 (WPAPCLIIAS…VLNYDAPVGA (359 aa)) is MBOAT fold. The Cytoplasmic portion of the chain corresponds to 166 to 170 (GALTE). The helical transmembrane segment at 171–193 (QMGLLLHVVNLATIICFPAAVAL) threads the bilayer. The Lumenal portion of the chain corresponds to 194–200 (LVESITP). A helical transmembrane segment spans residues 201 to 232 (VGSLFALASYSIIFLKLSSYRDVNLWCRQRRV). Topologically, residues 233-284 (KAKAVSAGKKVSGAAAQNTVSYPDNLTYRDLYYFIFAPTLCYELNFPRSPRI) are cytoplasmic. Positions 235–287 (KAVSAGKKVSGAAAQNTVSYPDNLTYRDLYYFIFAPTLCYELNFPRSPRIRKR) are intracellular loop 1 (IL1). The chain crosses the membrane as a helical span at residues 285 to 319 (RKRFLLRRVLEMLFFTQLQVGLIQQWMVPTIQNSM). At 320–326 (KPFKDMD) the chain is on the lumenal side. The helical transmembrane segment at 327–364 (YSRIIERLLKLAVPNHLIWLIFFYWLFHSCLNAVAELL) threads the bilayer. Residues 365-410 (QFGDREFYRDWWNAESVTYFWQNWNIPVHKWCIRHFYKPMLRLGSN) are Cytoplasmic-facing. The intracellular loop 2 (IL2) stretch occupies residues 365-410 (QFGDREFYRDWWNAESVTYFWQNWNIPVHKWCIRHFYKPMLRLGSN). The FYXDWWN motif signature appears at 371 to 377 (FYRDWWN). Residues 385 to 393 (WQNWNIPVH), Tyr401, and Arg415 each bind an acyl-CoA. Positions 391–405 (PVHKWCIRHFYKPML) are amphipathic helix (AH). A helical membrane pass occupies residues 411 to 431 (KWMARTGVFWASAFFHEYLVS). Residue His426 is part of the active site. Residues 432-439 (IPLRMFRL) are Lumenal-facing. A helical membrane pass occupies residues 440–458 (WAFTAMMAQVPLAWIVNRF). At 459–460 (FQ) the chain is on the cytoplasmic side. A helical transmembrane segment spans residues 461-492 (GNYGNAAVWVTLIIGQPVAVLMYVHDYYVLNY). Tyr488 is a binding site for an acyl-CoA. Residues 493-498 (DAPVGA) lie on the Lumenal side of the membrane.

This sequence belongs to the membrane-bound acyltransferase family. Sterol o-acyltransferase subfamily. In terms of assembly, homodimer or homotetramer; both forms have similar enzymatic activities.

It is found in the endoplasmic reticulum membrane. The catalysed reaction is an acyl-CoA + a 1,2-diacyl-sn-glycerol = a triacyl-sn-glycerol + CoA. The enzyme catalyses all-trans-retinol + an acyl-CoA = an all-trans-retinyl ester + CoA. It carries out the reaction 2-(9Z-octadecenoyl)-glycerol + (9Z)-octadecenoyl-CoA = 1,2-di-(9Z-octadecenoyl)-sn-glycerol + CoA. It catalyses the reaction 1,2-di-(9Z-octadecenoyl)-sn-glycerol + (9Z)-octadecenoyl-CoA = 1,2,3-tri-(9Z-octadecenoyl)-glycerol + CoA. The catalysed reaction is all-trans-retinol + hexadecanoyl-CoA = all-trans-retinyl hexadecanoate + CoA. The enzyme catalyses 1-O-(9Z-octadecenyl)-glycerol + (9Z)-octadecenoyl-CoA = 1-O-(9Z-octadecyl)-3-(9Z-octadecenoyl)-glycerol + CoA. It carries out the reaction 1-O-(9Z-octadecyl)-3-(9Z-octadecenoyl)-glycerol + (9Z)-octadecenoyl-CoA = 1-O-(9Z-octadecenyl)-2,3-di-(9Z-octadecenoyl)glycerol + CoA. It catalyses the reaction 1-(9Z-octadecenoyl)-glycerol + (9Z)-octadecenoyl-CoA = 1,2-di-(9Z-octadecenoyl)-glycerol + CoA. The catalysed reaction is 1,2-di-(9Z-octadecenoyl)-glycerol + (9Z)-octadecenoate + H(+) = 1,2,3-tri-(9Z-octadecenoyl)-glycerol + H2O. The enzyme catalyses 1-octadecanoyl-2-(5Z,8Z,11Z,14Z-eicosatetraenoyl)-sn-glycerol + (9Z)-octadecenoyl-CoA = 1-octadecanoyl-2-(5Z,8Z,11Z,14Z)-eicosatetraenoyl-3-(9Z)-octadecenoyl-sn-glycerol + CoA. It carries out the reaction hexadecane-1,2-diol + 2 hexadecanoyl-CoA = 1,2-O,O-dihexadecanoyl-1,2-hexadecanediol + 2 CoA. It catalyses the reaction hexadecane-1,2-diol + hexadecanoyl-CoA = 2-hydroxyhexadecyl hexadecanoate + CoA. The catalysed reaction is 2-(9Z-octadecenoyl)-glycerol + hexadecanoyl-CoA = 1-hexadecanoyl-2-(9Z-octadecenoyl)-sn-glycerol + CoA. The enzyme catalyses 1,2-di-(9Z-octadecenoyl)-sn-glycerol + hexadecanoyl-CoA = 1,2-di-(9Z)-octadecenoyl-3-hexadecanoyl-sn-glycerol + CoA. It carries out the reaction hexadecan-1-ol + hexadecanoyl-CoA = hexadecanyl hexadecanoate + CoA. It catalyses the reaction 13-cis-retinol + hexadecanoyl-CoA = 13-cis-retinyl hexadecanoate + CoA. The catalysed reaction is 1,3-di-(9Z-octadecenoyl)-glycerol + (9Z)-octadecenoyl-CoA = 1,2,3-tri-(9Z-octadecenoyl)-glycerol + CoA. The enzyme catalyses 2,3-di-(9Z)-octadecenoyl-sn-glycerol + (9Z)-octadecenoyl-CoA = 1,2,3-tri-(9Z-octadecenoyl)-glycerol + CoA. It functions in the pathway lipid metabolism; glycerolipid metabolism. Catalyzes the terminal and only committed step in triacylglycerol synthesis by using diacylglycerol and fatty acyl CoA as substrates. Highly expressed in epithelial cells of the small intestine and its activity is essential for the absorption of dietary fats. In liver, plays a role in esterifying exogenous fatty acids to glycerol, and is required to synthesize fat for storage. Also present in female mammary glands, where it produces fat in the milk. May be involved in VLDL (very low density lipoprotein) assembly. In contrast to DGAT2 it is not essential for survival. Functions as the major acyl-CoA retinol acyltransferase (ARAT) in the skin, where it acts to maintain retinoid homeostasis and prevent retinoid toxicity leading to skin and hair disorders. Exhibits additional acyltransferase activities, includin acyl CoA:monoacylglycerol acyltransferase (MGAT), wax monoester and wax diester synthases. Also able to use 1-monoalkylglycerol (1-MAkG) as an acyl acceptor for the synthesis of monoalkyl-monoacylglycerol (MAMAG). In Rattus norvegicus (Rat), this protein is Diacylglycerol O-acyltransferase 1.